Consider the following 177-residue polypeptide: ATP-dependent protease subunit HslV (177 aa).

The active site involves threonine 6. The Na(+) site is built by glycine 161, cysteine 164, and threonine 167.

Belongs to the peptidase T1B family. HslV subfamily. A double ring-shaped homohexamer of HslV is capped on each side by a ring-shaped HslU homohexamer. The assembly of the HslU/HslV complex is dependent on binding of ATP.

Its subcellular location is the cytoplasm. The enzyme catalyses ATP-dependent cleavage of peptide bonds with broad specificity.. Allosterically activated by HslU binding. Its function is as follows. Protease subunit of a proteasome-like degradation complex believed to be a general protein degrading machinery. In Petrotoga mobilis (strain DSM 10674 / SJ95), this protein is ATP-dependent protease subunit HslV.